We begin with the raw amino-acid sequence, 819 residues long: MRYDPSLIEEKWQKFWKEEQTFRAEEDETKTKYYVLDMFPYPSGAGLHVGHLIGYTATDIVARYKRAKGFSVLHPMGWDSFGLPAEQYAIRTGTHPRETTEKNIANFKQQLTSMGFSYDESREFATSDPEYYKWTQKLFLILYEKGLAYMADMAVNYCPELGTVLSNEEVENGFSVEGGYPVERRMLRQWVLRITAFADQLLGGLDELDWPESVKQLQRNWIGKSVGASVHFETEHGVLEVFTTRPDTLIGVSFLVLAPEHPLVDLLTSDEQKTIVAQYVKETQSKSERDRISEMKTKSGVFTGAYAKHPVTQNPIPIWIADYVLMGYGSGAVMGVPAHDDRDLLFAQQFDLPIISVVSEDGVCINSCHEDFSLDGLSGEEAKQYVINFLEKNNLGSAKVAYKLRDWLFSRQRYWGEPIPVIHFEDGSCRPLKDDELPLLPPEIQDYRPEGVGQGPLAKVKEWVNVFDSETQKEGKRETHTMPQWAGSCWYYLRFCDAHNSCAPWAEEKEQYWMPVDLYIGGAEHAVLHLLYARFWHQVFYEAGIVSTPEPFKKLVNQGLVLSTSYRIPGKGYIAPEMAKEENGQWISPSGELLDVRQEKMSKSKLNGVDPKVLIDEFGADAVRMYAMFSGPLDKNKLWSNQGVAGCRRFLNRFYEMATSSRVKDEDIFEGMSLAHKLVQRVTDDIEKLSLNTITSSFMEFINEFVKLPVYPKNAVEMAVRALAPIAPHISEELWVLLGNASGIEKAGWPKALPEYLEGKIVTIVVQVNGKLRARLDISKDAIEEEVVALAKEAVSKYLEGGVVRKTIFVLNRLVNFVI.

Residues 40-51 (PYPSGAGLHVGH) carry the 'HIGH' region motif. A 'KMSKS' region motif is present at residues 600–604 (KMSKS). Residue Lys-603 participates in ATP binding.

Belongs to the class-I aminoacyl-tRNA synthetase family.

The protein localises to the cytoplasm. The enzyme catalyses tRNA(Leu) + L-leucine + ATP = L-leucyl-tRNA(Leu) + AMP + diphosphate. This is Leucine--tRNA ligase from Chlamydia muridarum (strain MoPn / Nigg).